The chain runs to 728 residues: U-box domain-containing protein 4 (728 aa).

Residues Ser296 to Gln370 enclose the U-box domain. ARM repeat units lie at residues Gly441–Gly483 and Gly526–Ala568.

It catalyses the reaction S-ubiquitinyl-[E2 ubiquitin-conjugating enzyme]-L-cysteine + [acceptor protein]-L-lysine = [E2 ubiquitin-conjugating enzyme]-L-cysteine + N(6)-ubiquitinyl-[acceptor protein]-L-lysine.. The protein operates within protein modification; protein ubiquitination. Functionally, possesses E3 ubiquitin-protein ligase in vitro. The protein is U-box domain-containing protein 4 (PUB4) of Oryza sativa subsp. japonica (Rice).